The sequence spans 534 residues: Glucans biosynthesis protein D (534 aa).

The segment at residues 1–26 (MQRRDFIRNASLALAAFGLPSLPACA) is a signal peptide (tat-type signal).

It belongs to the OpgD/OpgG family. Post-translationally, predicted to be exported by the Tat system. The position of the signal peptide cleavage has not been experimentally proven.

The protein resides in the periplasm. It participates in glycan metabolism; osmoregulated periplasmic glucan (OPG) biosynthesis. Probably involved in the control of the structural glucose backbone of osmoregulated periplasmic glucans (OPGs). This is Glucans biosynthesis protein D from Stenotrophomonas maltophilia (strain R551-3).